The chain runs to 142 residues: Small ribosomal subunit protein uS9 (142 aa).

This sequence belongs to the universal ribosomal protein uS9 family. As to quaternary structure, component of the small ribosomal subunit. Mature ribosomes consist of a small (40S) and a large (60S) subunit. The 40S subunit contains about 32 different proteins and 1 molecule of RNA (18S). The 60S subunit contains 45 different proteins and 3 molecules of RNA (25S, 5.8S and 5S).

Its subcellular location is the cytoplasm. In terms of biological role, component of the ribosome, a large ribonucleoprotein complex responsible for the synthesis of proteins in the cell. The small ribosomal subunit (SSU) binds messenger RNAs (mRNAs) and translates the encoded message by selecting cognate aminoacyl-transfer RNA (tRNA) molecules. The large subunit (LSU) contains the ribosomal catalytic site termed the peptidyl transferase center (PTC), which catalyzes the formation of peptide bonds, thereby polymerizing the amino acids delivered by tRNAs into a polypeptide chain. The nascent polypeptides leave the ribosome through a tunnel in the LSU and interact with protein factors that function in enzymatic processing, targeting, and the membrane insertion of nascent chains at the exit of the ribosomal tunnel. The protein is Small ribosomal subunit protein uS9 (RPS16A) of Candida albicans (strain SC5314 / ATCC MYA-2876) (Yeast).